We begin with the raw amino-acid sequence, 204 residues long: Protein OPG030 (204 aa).

A BACK domain is found at 95 to 177 (FLRQYINNNI…ITYSELTNAI (83 aa)).

This sequence belongs to the orthopoxvirus OPG030 family.

This is Protein OPG030 (OPG30) from Homo sapiens (Human).